The following is a 741-amino-acid chain: Catalase-peroxidase (741 aa).

A signal peptide spans 1 to 21 (MRNFRRFTIALLVLFLGPIGA). Residues 109-231 (WHSAGTYRIS…LAAVQMGLIY (123 aa)) constitute a cross-link (tryptophyl-tyrosyl-methioninium (Trp-Tyr) (with M-257)). The active-site Proton acceptor is the H110. A cross-link (tryptophyl-tyrosyl-methioninium (Tyr-Met) (with W-109)) is located at residues 231 to 257 (YVNPEGPNGNPDPLAAAKDIRETFGRM). A heme b-binding site is contributed by H272.

It belongs to the peroxidase family. Peroxidase/catalase subfamily. Homodimer or homotetramer. It depends on heme b as a cofactor. Formation of the three residue Trp-Tyr-Met cross-link is important for the catalase, but not the peroxidase activity of the enzyme.

The catalysed reaction is H2O2 + AH2 = A + 2 H2O. It carries out the reaction 2 H2O2 = O2 + 2 H2O. Bifunctional enzyme with both catalase and broad-spectrum peroxidase activity. This is Catalase-peroxidase from Leptospira biflexa serovar Patoc (strain Patoc 1 / Ames).